An 84-amino-acid polypeptide reads, in one-letter code: Dolichol phosphate-mannose biosynthesis regulatory protein (84 aa).

A run of 2 helical transmembrane segments spans residues 11 to 31 (LGLVAVSLIIFTYYTAWVILL) and 49 to 69 (YAVAIPLAAGLLLLLFVGLFI).

The protein belongs to the DPM2 family. As to quaternary structure, component of the dolichol-phosphate mannose (DPM) synthase complex composed of DPM1, DPM2 and DPM3; in the complex interacts directly with DPM3. Component of the glycosylphosphatidylinositol-N-acetylglucosaminyltransferase (GPI-GnT) complex composed at least by PIGA, PIGC, PIGH, PIGP, PIGQ, PIGY and DPM2. Interacts with PIGA, PIGC and PIGQ.

The protein localises to the endoplasmic reticulum membrane. It functions in the pathway protein modification; protein glycosylation. Regulates the biosynthesis of dolichol phosphate-mannose. Regulatory subunit of the dolichol-phosphate mannose (DPM) synthase complex; essential for the ER localization and stable expression of DPM1. Part of the glycosylphosphatidylinositol-N-acetylglucosaminyltransferase (GPI-GnT) complex that catalyzes the transfer of N-acetylglucosamine from UDP-N-acetylglucosamine to phosphatidylinositol and participates in the first step of GPI biosynthesis. May act by regulating the GPI-GNT complex. The chain is Dolichol phosphate-mannose biosynthesis regulatory protein from Homo sapiens (Human).